The chain runs to 444 residues: ATP-dependent RNA helicase SrmB (444 aa).

A Q motif motif is present at residues 4–32 (TTFSELELDESLLEALQDKGFTRPTAIQA). A Helicase ATP-binding domain is found at 35-209 (IPPALDGRDV…AERLLEDPVE (175 aa)). Position 48–55 (48–55 (APTGTGKT)) interacts with ATP. The DEAD box signature appears at 157–160 (DEAD). The Helicase C-terminal domain maps to 238–387 (LLVHLLKQPE…ELRPKTRAPS (150 aa)). The segment covering 382-391 (KTRAPSEKQT) has biased composition (basic and acidic residues). Residues 382–444 (KTRAPSEKQT…TGVPPQTTEE (63 aa)) form a disordered region. Composition is skewed to basic residues over residues 394 to 406 (PSKKVLAKRAEKK) and 414 to 432 (PRVKKRHRDTKNIGKRRKP).

Belongs to the DEAD box helicase family. SrmB subfamily. In terms of assembly, interacts with the 50S ribosomal subunit. Forms a complex with the 50S ribosomal proteins L4 and L24, and a region near the 5'-end of 23S rRNA.

It is found in the cytoplasm. The catalysed reaction is ATP + H2O = ADP + phosphate + H(+). In terms of biological role, DEAD-box RNA helicase involved in the assembly of the 50S ribosomal subunit at low temperature. Exhibits RNA-stimulated ATP hydrolysis and RNA unwinding activity. Acts before DeaD. This Escherichia coli (strain K12) protein is ATP-dependent RNA helicase SrmB.